The sequence spans 209 residues: Glutathione S-transferase 1-1 (209 aa).

The GST N-terminal domain maps to 1-81 (MADFYYLPGS…YLVEKYGKTD (81 aa)). Residues 51–53 (HTI) and 65–67 (ESR) contribute to the glutathione site. The 123-residue stretch at 87–209 (CPKKRAVINQ…GCLEFKKYFE (123 aa)) folds into the GST C-terminal domain.

It belongs to the GST superfamily. Theta family. In terms of assembly, homodimer.

The catalysed reaction is RX + glutathione = an S-substituted glutathione + a halide anion + H(+). Functionally, conjugation of reduced glutathione to a wide number of exogenous and endogenous hydrophobic electrophiles. The chain is Glutathione S-transferase 1-1 (GstD1) from Drosophila yakuba (Fruit fly).